The chain runs to 352 residues: N-acetyl-gamma-glutamyl-phosphate reductase (352 aa).

Cys155 is a catalytic residue.

It belongs to the NAGSA dehydrogenase family. Type 1 subfamily.

The protein resides in the cytoplasm. The catalysed reaction is N-acetyl-L-glutamate 5-semialdehyde + phosphate + NADP(+) = N-acetyl-L-glutamyl 5-phosphate + NADPH + H(+). Its pathway is amino-acid biosynthesis; L-arginine biosynthesis; N(2)-acetyl-L-ornithine from L-glutamate: step 3/4. Its function is as follows. Catalyzes the NADPH-dependent reduction of N-acetyl-5-glutamyl phosphate to yield N-acetyl-L-glutamate 5-semialdehyde. The polypeptide is N-acetyl-gamma-glutamyl-phosphate reductase (Cyanothece sp. (strain PCC 7425 / ATCC 29141)).